Here is a 272-residue protein sequence, read N- to C-terminus: Phosphatidylglycerol--prolipoprotein diacylglyceryl transferase (272 aa).

7 helical membrane passes run 17 to 37, 55 to 75, 90 to 110, 125 to 145, 174 to 194, 202 to 222, and 230 to 250; these read LQVH…WGLA, LVFY…VLFY, VWTG…AMLF, FIAP…FIGG, PSQI…LWWF, MAVS…MEFF, and GFIL…MLLI. Arg138 provides a ligand contact to a 1,2-diacyl-sn-glycero-3-phospho-(1'-sn-glycerol).

It belongs to the Lgt family.

Its subcellular location is the cell inner membrane. The enzyme catalyses L-cysteinyl-[prolipoprotein] + a 1,2-diacyl-sn-glycero-3-phospho-(1'-sn-glycerol) = an S-1,2-diacyl-sn-glyceryl-L-cysteinyl-[prolipoprotein] + sn-glycerol 1-phosphate + H(+). It participates in protein modification; lipoprotein biosynthesis (diacylglyceryl transfer). In terms of biological role, catalyzes the transfer of the diacylglyceryl group from phosphatidylglycerol to the sulfhydryl group of the N-terminal cysteine of a prolipoprotein, the first step in the formation of mature lipoproteins. The sequence is that of Phosphatidylglycerol--prolipoprotein diacylglyceryl transferase from Acinetobacter baumannii (strain ACICU).